Reading from the N-terminus, the 530-residue chain is MSGPALEVAAAKTAEQGQVPVLAAAVRGDTKVSGDSIHAATTAVSDGDNQSSTMSGKTAAGDATSPASGSGSGGWFHWHEPGTSKAEKKLIFKLDWFLLSYSCLCFFIKQLDGNNVTNAYASGMQEQLGFGPGNELSWMNTYFNIGQIIGAPFANMIITVVRPRYWLPACLMTWSAFVLGMYRCETAAQFYVLRFFIGLFEGAAWPGITYTLGCWYRKSEMARRSALFVMSGVLGQMFSGYLQAALYTGMDGKGGLAAWRWLFIFDFILAVPIAIYGLFCFPDTPHKTSAWYLNSWEREKAVERIDSEGRKPIGKLDLSVFKRIFTSWQVYAFTLGYALWSLTVGSYVMQYFTLYLKATKEYTIPQINNIPTALGAVNFVTMLTTGFVSDKIGRRGPVCLAVGCVLIFTYSIFTAWNVPHRLLMAVFILNGVYGCYTPLLAGWVNECCGGDQQKRAFILGLMTSVGGAVVIPFQQLQFPSSQAPQFKQTHGWPSALAFVIALTCWTGLGIPLLQRRMEKQAKRNEAEHEA.

The tract at residues 41–76 is disordered; the sequence is TTAVSDGDNQSSTMSGKTAAGDATSPASGSGSGGWF. Over residues 42 to 56 the composition is skewed to polar residues; that stretch reads TAVSDGDNQSSTMSG. Residues 59–69 are compositionally biased toward low complexity; the sequence is AAGDATSPASG. Transmembrane regions (helical) follow at residues 165–182, 195–215, 226–246, 261–281, 324–344, 369–389, 396–416, 422–442, 456–476, and 493–513; these read YWLP…LGMY, FFIG…LGCW, ALFV…QAAL, WLFI…LFCF, IFTS…SLTV, NIPT…GFVS, GPVC…FTAW, LLMA…LLAG, AFIL…FQQL, and PSAL…IPLL.

It belongs to the major facilitator superfamily. Allantoate permease family.

It localises to the cell membrane. Its function is as follows. MFS transporter; part of the gene cluster that mediates the biosynthesis of dihydroxynaphthalene (DHN)-melanin, a bluish-green pigment forming a dark layer in the conidial wall that protects the conidia from UV radiations. This Pestalotiopsis fici (strain W106-1 / CGMCC3.15140) protein is MFS transporter PfmaC.